Consider the following 1170-residue polypeptide: DNA-directed RNA polymerase subunit beta (1170 aa).

It belongs to the RNA polymerase beta chain family. The RNAP catalytic core consists of 2 alpha, 1 beta, 1 beta' and 1 omega subunit. When a sigma factor is associated with the core the holoenzyme is formed, which can initiate transcription.

The catalysed reaction is RNA(n) + a ribonucleoside 5'-triphosphate = RNA(n+1) + diphosphate. In terms of biological role, DNA-dependent RNA polymerase catalyzes the transcription of DNA into RNA using the four ribonucleoside triphosphates as substrates. In Corynebacterium urealyticum (strain ATCC 43042 / DSM 7109), this protein is DNA-directed RNA polymerase subunit beta.